A 408-amino-acid chain; its full sequence is Solute carrier family 35 member F1 (408 aa).

The interval 1 to 20 is disordered; it reads MIPPEPPQPQLQPPPPPAPP. Helical transmembrane passes span 60 to 80, 94 to 114, 129 to 147, 159 to 179, 186 to 206, 221 to 241, 247 to 267, 284 to 304, 311 to 331, and 335 to 355; these read MLIS…IGLT, VFQS…TLAV, WWKY…YLVV, QLLD…FLLI, FIGI…DVLV, LLVL…ESII, VEFL…QLAI, LLYV…PVVI, SVNL…LFLF, and FSGL…LYSS.

This sequence belongs to the SLC35F solute transporter family.

The protein resides in the cytoplasmic vesicle. It is found in the secretory vesicle. Its subcellular location is the synaptic vesicle membrane. In terms of biological role, putative solute transporter. The chain is Solute carrier family 35 member F1 (Slc35f1) from Mus musculus (Mouse).